We begin with the raw amino-acid sequence, 564 residues long: Bifunctional protein CrtB/UppS (564 aa).

D329 is an active-site residue. A Mg(2+)-binding site is contributed by D329. Substrate is bound by residues 330-333 (GNRR), W334, H346, and 374-376 (STE). The Proton acceptor role is filled by N377. Substrate contacts are provided by residues W378, R380, R497, and 502–504 (RIS). Residue E515 participates in Mg(2+) binding.

It in the N-terminal section; belongs to the phytoene/squalene synthase family. The protein in the C-terminal section; belongs to the UPP synthase family. As to quaternary structure, homodimer. Mg(2+) serves as cofactor.

The catalysed reaction is 2 (2E,6E,10E)-geranylgeranyl diphosphate = 15-cis-phytoene + 2 diphosphate. It participates in carotenoid biosynthesis; phytoene biosynthesis; all-trans-phytoene from geranylgeranyl diphosphate: step 1/1. In terms of biological role, catalyzes the reaction from prephytoene diphosphate to phytoene. Functionally, catalyzes the condensation of isopentenyl diphosphate (IPP) with allylic pyrophosphates generating different type of terpenoids. The protein is Bifunctional protein CrtB/UppS (crtB/uppS3) of Streptomyces coelicolor (strain ATCC BAA-471 / A3(2) / M145).